The following is a 334-amino-acid chain: Broad-range acid phosphatase DET1 (334 aa).

His32 (tele-phosphohistidine intermediate) is an active-site residue. Substrate contacts are provided by residues Asn38, 44–45 (NG), and Arg108. The active-site Proton donor/acceptor is the Glu126. Substrate-binding positions include 168-171 (LNNT) and 195-205 (RVKDEPRIREQ). Position 248 is a phosphoserine (Ser248).

It belongs to the phosphoglycerate mutase family.

The protein resides in the cytoplasm. It is found in the nucleus. Metal-independent, broad-range acid phosphatase. Involved, either directly or indirectly, in the bidirectional transport of sterols between the endoplasmic reticulum and the plasma membrane. In Saccharomyces cerevisiae (strain ATCC 204508 / S288c) (Baker's yeast), this protein is Broad-range acid phosphatase DET1 (DET1).